The sequence spans 470 residues: Pyruvate kinase I (470 aa).

Arg-32 serves as a coordination point for substrate. K(+) contacts are provided by Asn-34, Ser-36, Asp-66, and Thr-67. 34-37 (NFSH) lines the ATP pocket. Arg-73 serves as a coordination point for ATP. Lys-76 carries the post-translational modification N6-acetyllysine. Lys-156 lines the ATP pocket. Glu-222 contributes to the Mg(2+) binding site. Gly-245, Asp-246, and Thr-278 together coordinate substrate. Position 246 (Asp-246) interacts with Mg(2+). Lys-319 bears the N6-acetyllysine mark.

This sequence belongs to the pyruvate kinase family. As to quaternary structure, homotetramer. Mg(2+) is required as a cofactor. K(+) serves as cofactor.

The enzyme catalyses pyruvate + ATP = phosphoenolpyruvate + ADP + H(+). Its pathway is carbohydrate degradation; glycolysis; pyruvate from D-glyceraldehyde 3-phosphate: step 5/5. The protein is Pyruvate kinase I (pykF) of Escherichia coli O157:H7.